The chain runs to 194 residues: Phosphoheptose isomerase (194 aa).

Positions 34–188 (LANIFTKGKK…IEGVERIMFP (155 aa)) constitute an SIS domain. 49 to 51 (NGG) is a substrate binding site. Zn(2+)-binding residues include histidine 58 and glutamate 62. Substrate contacts are provided by residues glutamate 62, 90–91 (ND), 116–118 (STS), serine 121, and glutamine 168. 2 residues coordinate Zn(2+): glutamine 168 and histidine 176.

This sequence belongs to the SIS family. GmhA subfamily. Zn(2+) serves as cofactor.

Its subcellular location is the cytoplasm. The enzyme catalyses 2 D-sedoheptulose 7-phosphate = D-glycero-alpha-D-manno-heptose 7-phosphate + D-glycero-beta-D-manno-heptose 7-phosphate. It participates in carbohydrate biosynthesis; D-glycero-D-manno-heptose 7-phosphate biosynthesis; D-glycero-alpha-D-manno-heptose 7-phosphate and D-glycero-beta-D-manno-heptose 7-phosphate from sedoheptulose 7-phosphate: step 1/1. Functionally, catalyzes the isomerization of sedoheptulose 7-phosphate in D-glycero-D-manno-heptose 7-phosphate. This is Phosphoheptose isomerase from Fusobacterium nucleatum subsp. nucleatum (strain ATCC 25586 / DSM 15643 / BCRC 10681 / CIP 101130 / JCM 8532 / KCTC 2640 / LMG 13131 / VPI 4355).